The following is a 1065-amino-acid chain: Exportin-T (1065 aa).

This sequence belongs to the exportin family.

It is found in the nucleus. It localises to the cytoplasm. Its function is as follows. tRNA nucleus export receptor which facilitates tRNA translocation across the nuclear pore complex. Involved in pre-tRNA splicing, probably by affecting the interaction of pre-tRNA with splicing endonuclease. The sequence is that of Exportin-T (LOS1) from Coprinopsis cinerea (strain Okayama-7 / 130 / ATCC MYA-4618 / FGSC 9003) (Inky cap fungus).